A 436-amino-acid chain; its full sequence is GTPase Der (436 aa).

2 EngA-type G domains span residues 4–167 and 176–351; these read PVVA…KNIP and VQFC…ENHS. GTP is bound by residues 10-17, 57-61, 119-122, 182-189, 229-233, and 294-297; these read GRPNVGKS, DTGGI, NKVD, DTAGM, and NKWD. One can recognise a KH-like domain in the interval 352–436; that stretch reads MRVQTNILND…PIRIFARARK (85 aa).

The protein belongs to the TRAFAC class TrmE-Era-EngA-EngB-Septin-like GTPase superfamily. EngA (Der) GTPase family. In terms of assembly, associates with the 50S ribosomal subunit.

In terms of biological role, GTPase that plays an essential role in the late steps of ribosome biogenesis. The polypeptide is GTPase Der (Bacillus licheniformis (strain ATCC 14580 / DSM 13 / JCM 2505 / CCUG 7422 / NBRC 12200 / NCIMB 9375 / NCTC 10341 / NRRL NRS-1264 / Gibson 46)).